A 102-amino-acid chain; its full sequence is Protein isd11 (102 aa).

This sequence belongs to the complex I LYR family.

It localises to the mitochondrion. Required for mitochondrial iron-sulfur (Fe-S) protein biosynthesis. The sequence is that of Protein isd11 (isd11) from Schizosaccharomyces pombe (strain 972 / ATCC 24843) (Fission yeast).